A 257-amino-acid chain; its full sequence is tRNA pseudouridine synthase C (257 aa).

Asp-54 is an active-site residue.

Belongs to the pseudouridine synthase RluA family.

It carries out the reaction uridine(65) in tRNA = pseudouridine(65) in tRNA. Its function is as follows. Responsible for synthesis of pseudouridine from uracil-65 in transfer RNAs. The polypeptide is tRNA pseudouridine synthase C (truC) (Yersinia pestis).